The primary structure comprises 340 residues: 4-dimethylallyltryptophan N-methyltransferase easF (340 aa).

This sequence belongs to the methyltransferase superfamily. Homodimer.

The enzyme catalyses 4-(3-methylbut-2-enyl)-L-tryptophan + S-adenosyl-L-methionine = 4-(3-methylbut-2-enyl)-L-abrine + S-adenosyl-L-homocysteine + H(+). Its pathway is alkaloid biosynthesis; ergot alkaloid biosynthesis. Its function is as follows. 4-dimethylallyltryptophan N-methyltransferase; part of the gene cluster that mediates the biosynthesis of fungal ergot alkaloid. DmaW catalyzes the first step of ergot alkaloid biosynthesis by condensing dimethylallyl diphosphate (DMAP) and tryptophan to form 4-dimethylallyl-L-tryptophan. The second step is catalyzed by the methyltransferase easF that methylates 4-dimethylallyl-L-tryptophan in the presence of S-adenosyl-L-methionine, resulting in the formation of 4-dimethylallyl-L-abrine. The catalase easC and the FAD-dependent oxidoreductase easE then transform 4-dimethylallyl-L-abrine to chanoclavine-I which is further oxidized by easD in the presence of NAD(+), resulting in the formation of chanoclavine-I aldehyde. Chanoclavine-I aldehyde is the precursor of ergoamides and ergopeptines in Clavicipitaceae, and clavine-type alcaloids such as fumiclavine in Trichocomaceae. However, the metabolites downstream of chanoclavine-I aldehyde in Arthrodermataceae have not been identified yet. The protein is 4-dimethylallyltryptophan N-methyltransferase easF of Trichophyton verrucosum (strain HKI 0517).